A 431-amino-acid chain; its full sequence is SH2 domain-containing protein 4B (431 aa).

Positions 201 to 235 (QASENEEREWEEQLRRSKAADEERSRRAQRARDEY) are disordered. Over residues 211-235 (EEQLRRSKAADEERSRRAQRARDEY) the composition is skewed to basic and acidic residues. The SH2 domain occupies 325–417 (WFHGIISRES…SGGELLQEPC (93 aa)).

This chain is SH2 domain-containing protein 4B (Sh2d4b), found in Mus musculus (Mouse).